A 200-amino-acid chain; its full sequence is Imidazoleglycerol-phosphate dehydratase (200 aa).

This sequence belongs to the imidazoleglycerol-phosphate dehydratase family.

The protein resides in the cytoplasm. It catalyses the reaction D-erythro-1-(imidazol-4-yl)glycerol 3-phosphate = 3-(imidazol-4-yl)-2-oxopropyl phosphate + H2O. The protein operates within amino-acid biosynthesis; L-histidine biosynthesis; L-histidine from 5-phospho-alpha-D-ribose 1-diphosphate: step 6/9. The chain is Imidazoleglycerol-phosphate dehydratase from Prosthecochloris aestuarii (strain DSM 271 / SK 413).